We begin with the raw amino-acid sequence, 244 residues long: Mitochondrial import inner membrane translocase subunit Tim21 (244 aa).

Residues 1–18 (MICAFLRVVQHAEKLHGS) constitute a mitochondrion transit peptide. A disordered region spans residues 65–96 (TQGPDPRKAKEDSTKQVSIRRNQREETGVSMS). Basic and acidic residues predominate over residues 69-78 (DPRKAKEDST). Residues 107-127 (SYLIVVLFGVGLTGGLLYAIF) form a helical membrane-spanning segment.

This sequence belongs to the TIM21 family. In terms of assembly, component of the TIM23 complex. Component of the MITRAC (mitochondrial translation regulation assembly intermediate of cytochrome c oxidase complex) complex, the core components of this complex being COA3/MITRAC12 and COX14. Interacts with COA3 and MT-CO1/COX1.

It is found in the mitochondrion membrane. In terms of biological role, participates in the translocation of transit peptide-containing proteins across the mitochondrial inner membrane. Also required for assembly of mitochondrial respiratory chain complex I and complex IV as component of the MITRAC (mitochondrial translation regulation assembly intermediate of cytochrome c oxidase complex) complex. Probably shuttles between the presequence translocase and respiratory-chain assembly intermediates in a process that promotes incorporation of early nuclear-encoded subunits into these complexes. This is Mitochondrial import inner membrane translocase subunit Tim21 (Timm21) from Mus musculus (Mouse).